Consider the following 157-residue polypeptide: Probable succinate transporter subunit YjjB (157 aa).

The next 4 membrane-spanning stretches (helical) occupy residues 2–22 (GIIS…IPAV), 55–75 (AGFN…SIGI), 87–107 (IFTV…TAMI), and 129–149 (FLKA…PGLW).

It belongs to the ThrE exporter (TC 2.A.79) family. The transporter is composed of YjjB and YjjP.

The protein localises to the cell inner membrane. Its function is as follows. Involved in succinate export with YjjP. Both proteins are required for export. The chain is Probable succinate transporter subunit YjjB from Klebsiella pneumoniae subsp. pneumoniae (strain ATCC 700721 / MGH 78578).